We begin with the raw amino-acid sequence, 270 residues long: Cell surface glycoprotein CD200 receptor 4 (270 aa).

The first 25 residues, 1–25 (MHALGRIPTLTLLIFINIFVSGSSC), serve as a signal peptide directing secretion. An Ig-like V-type domain is found at 26-145 (TDENQTIQND…GNLEKVYDLQ (120 aa)). The Extracellular segment spans residues 26–241 (TDENQTIQND…TMTTPRSLLT (216 aa)). N-linked (GlcNAc...) asparagine glycosylation is found at Asn29 and Asn44. 4 disulfide bridges follow: Cys58/Cys129, Cys82/Cys97, Cys164/Cys213, and Cys183/Cys201. The 96-residue stretch at 134–229 (PEGNLEKVYD…GNQSLSIELS (96 aa)) folds into the Ig-like C2-type domain. Asn192 carries N-linked (GlcNAc...) asparagine glycosylation. The helical transmembrane segment at 242 to 262 (ILYVKMALLVIILLNVGFAFF) threads the bilayer. At 263-270 (QKRNFART) the chain is on the cytoplasmic side.

It belongs to the CD200R family. As to quaternary structure, interacts with TYROBP. In terms of tissue distribution, highly expressed in monocytes, NK cells and a subset of NKT cells. Weakly expressed in granulocytes and B-cells (at protein level). Expressed in brain, lung, testis, thymus, intestine and uterus. Expressed in bone marrow derived-macrophage and dendritic cells and mast cells.

It localises to the membrane. Its function is as follows. Involved in the recruitment or surface expression of the TYROBP receptor. This chain is Cell surface glycoprotein CD200 receptor 4 (Cd200r4), found in Mus musculus (Mouse).